The chain runs to 1051 residues: Leucine zipper protein 1 (1051 aa).

N-acetylalanine is present on alanine 2. Positions 11–354 (ASNRHLRFKL…KLQVKKQKEL (344 aa)) form a coiled coil. 4 disordered regions span residues 247–293 (ISST…KDLN), 374–401 (RTKL…HKRE), 432–554 (AAKA…SQVT), and 569–601 (ASSQ…SKAP). A compositionally biased stretch (basic and acidic residues) spans 254 to 293 (KESRRKGSLDYLKQVENETRDKSENEKNRNQEDNKVKDLN). Phosphoserine is present on residues serine 256, serine 261, serine 395, serine 513, serine 571, serine 575, serine 612, and serine 660. Positions 569–578 (ASSQRASSEG) are enriched in polar residues. A disordered region spans residues 675–727 (VNTTITPEPEPKLQPNSREKVKSRGGTRTPLFENDKNAAVENDSAKSMRSSSN). The residue at position 680 (threonine 680) is a Phosphothreonine. Serine 691 bears the Phosphoserine mark. Basic and acidic residues predominate over residues 707-720 (ENDKNAAVENDSAK). Serine 746 is subject to Phosphoserine. Residues 789–799 (VTSKVTSSITI) show a composition bias toward low complexity. The segment at 789–837 (VTSKVTSSITIYPSDSSGPRAVPTEAPRERHTSTSNIQVGPPELTSVSN) is disordered. The segment at 834 to 884 (SVSNHISSPLELSIHKHDITLQLTEAERVGDGSPKNRAETVVSRSSILIKP) is required for interaction with FLNA. Phosphoserine is present on serine 906. The segment covering 929-938 (RDLKCSEDPP) has biased composition (basic and acidic residues). The disordered stretch occupies residues 929–1000 (RDLKCSEDPP…TQSSLTASEV (72 aa)). 2 stretches are compositionally biased toward polar residues: residues 946 to 958 (EATN…SSTD) and 989 to 999 (RRTQSSLTASE). The residue at position 957 (threonine 957) is a Phosphothreonine. Serine 993 carries the post-translational modification Phosphoserine.

In terms of assembly, component of the CERF-1 ISWI chromatin remodeling complex (also called the CECR2-containing remodeling factor (CERF) complex) at least composed of CECR2 and SMARCA1. Component of the CERF-5 ISWI chromatin remodeling complex at least composed of CECR2 and SMARCA5/SNF2H. LUZP1 is detected as part of the CERF-1 and CERF-5 complexes in embryonic stem (ES) cells where it is involved in complex stabilization but is not detected in the complexes in the testis. Interacts (via C-terminus) with LIMA1/EPLIN; both proteins restrict ciliation and may work together to regulate this process. Interacts with myosin light chain MYL9; the interaction results in inhibition of phosphorylation of MYL9 by DAPK3. Interacts with DAPK3; the interaction is likely to occur throughout the cell cycle and reduces the LUZP1-mediated suppression of MYL9 phosphorylation. Interacts with the chromosomal passenger complex (CPC); CPC kinase activity is required for localization of LUZP1 to the centromere. Expressed in cerebral cortex, cerebellum, hippocampus and brain stem.

It localises to the cytoplasm. Its subcellular location is the cytoskeleton. The protein resides in the microtubule organizing center. It is found in the centrosome. The protein localises to the cilium basal body. It localises to the midbody. Its subcellular location is the chromosome. The protein resides in the centromere. It is found in the spindle. The protein localises to the stress fiber. It localises to the nucleus. Its subcellular location is the cell projection. The protein resides in the dendrite. It is found in the perikaryon. The protein localises to the cell junction. It localises to the tight junction. In terms of biological role, F-actin cross-linking protein. Stabilizes actin and acts as a negative regulator of primary cilium formation. Positively regulates the phosphorylation of both myosin II and protein phosphatase 1 regulatory subunit PPP1R12A/MYPT1 and promotes the assembly of myosin II stacks within actin stress fibers. Inhibits the phosphorylation of myosin light chain MYL9 by DAPK3 and suppresses the constriction velocity of the contractile ring during cytokinesis. Binds to microtubules and promotes epithelial cell apical constriction by up-regulating levels of diphosphorylated myosin light chain (MLC) through microtubule-dependent inhibition of MLC dephosphorylation by myosin phosphatase. Involved in regulation of cell migration, nuclear size and centriole number, probably through regulation of the actin cytoskeleton. Component of the CERF-1 and CERF-5 chromatin remodeling complexes in embryonic stem cells where it acts to stabilize the complexes. Plays a role in embryonic brain and cardiovascular development. In Rattus norvegicus (Rat), this protein is Leucine zipper protein 1 (Luzp1).